We begin with the raw amino-acid sequence, 56 residues long: Small ribosomal subunit protein uS14 (56 aa).

Zn(2+)-binding residues include cysteine 21, cysteine 24, cysteine 39, and cysteine 42.

Belongs to the universal ribosomal protein uS14 family. In terms of assembly, component of the 40S small ribosomal subunit. Requires Zn(2+) as cofactor.

The protein resides in the cytoplasm. Its subcellular location is the cytosol. The protein localises to the rough endoplasmic reticulum. The polypeptide is Small ribosomal subunit protein uS14 (RpS29) (Scarabaeus laticollis (Scarab dung beetle)).